We begin with the raw amino-acid sequence, 1172 residues long: Laminin subunit beta-3 (1172 aa).

An N-terminal signal peptide occupies residues 1–17 (MRPFFLLCFALPGLLHA). The 228-residue stretch at 22–249 (SRGACYPPVG…AVSQLRLQGS (228 aa)) folds into the Laminin N-terminal domain. Asn220 carries an N-linked (GlcNAc...) asparagine glycan. 24 cysteine pairs are disulfide-bonded: Cys250–Cys259, Cys252–Cys279, Cys281–Cys290, Cys293–Cys313, Cys316–Cys325, Cys318–Cys343, Cys346–Cys355, Cys358–Cys376, Cys379–Cys392, Cys381–Cys399, Cys401–Cys410, Cys413–Cys428, Cys431–Cys444, Cys433–Cys451, Cys453–Cys462, Cys465–Cys478, Cys481–Cys493, Cys483–Cys500, Cys502–Cys511, Cys519–Cys531, Cys534–Cys546, Cys536–Cys553, Cys555–Cys564, and Cys567–Cys578. 6 Laminin EGF-like domains span residues 250-315 (CFCH…ECQR), 316-378 (CDCN…TCIS), 379-430 (CECD…GCHR), 431-480 (CDCN…GCEP), 481-533 (CACD…GCRA), and 534-580 (CDCD…VCVA). Residues 579–785 (VACHPCFQTY…SLPDLTPTFN (207 aa)) form a domain II region. N-linked (GlcNAc...) asparagine glycosylation occurs at Asn604. Residues 723 to 757 (EQSAQAAQQVSDSSRLLDQLRDSRREAERLVRQAG) are a coiled coil. Residues 786 to 816 (KLCGNSRQMACTPISCPGELCPQDNGTACGS) are domain alpha. The N-linked (GlcNAc...) asparagine glycan is linked to Asn810. The tract at residues 817-1170 (RCRGVLPRAG…INGRVLYYAT (354 aa)) is domain I. Coiled coils occupy residues 831–884 (MAGQ…MEED) and 948–1133 (VLSQ…ELEL).

As to quaternary structure, laminin is a complex glycoprotein, consisting of three different polypeptide chains (alpha, beta, gamma), which are bound to each other by disulfide bonds into a cross-shaped molecule comprising one long and three short arms with globules at each end. Beta-3 is a subunit of laminin-5 (laminin-332 or epiligrin/kalinin/nicein). Interacts with ECM1. In terms of tissue distribution, found in the basement membranes (major component).

The protein resides in the secreted. The protein localises to the extracellular space. It localises to the extracellular matrix. Its subcellular location is the basement membrane. Functionally, binding to cells via a high affinity receptor, laminin is thought to mediate the attachment, migration and organization of cells into tissues during embryonic development by interacting with other extracellular matrix components. The chain is Laminin subunit beta-3 (LAMB3) from Homo sapiens (Human).